Consider the following 48-residue polypeptide: MIWIKIILLMIVCLVVSVLVVVWIILLSEVFVLLWKLSQILNIIDLLL.

A helical transmembrane segment spans residues 6–26; sequence IILLMIVCLVVSVLVVVWIIL.

The protein localises to the host membrane. This is an uncharacterized protein from Spiroplasma melliferum (SpV4).